The primary structure comprises 656 residues: Chaperone protein DnaK (656 aa).

Residues 590–605 are compositionally biased toward gly residues; it reads GGAAGGAAGGAAGGAA. The tract at residues 590–656 is disordered; the sequence is GGAAGGAAGG…DGQPKPGPAA (67 aa). A compositionally biased stretch (low complexity) spans 606 to 621; that stretch reads GDAAGAAGDSTGDAAG. A compositionally biased stretch (gly residues) spans 622 to 635; the sequence is AAGGPSEGPAGDAG.

It belongs to the heat shock protein 70 family.

In terms of biological role, acts as a chaperone. In Cenarchaeum symbiosum (strain A), this protein is Chaperone protein DnaK.